Consider the following 367-residue polypeptide: Dual specificity protein phosphatase 1 (367 aa).

Residues 20–137 enclose the Rhodanese domain; that stretch reads RAAQCLLLDC…FSASCPELCS (118 aa). The 142-residue stretch at 173–314 folds into the Tyrosine-protein phosphatase domain; the sequence is GPVEILPFLY…LLQFESQVLA (142 aa). Cys-258 functions as the Phosphocysteine intermediate in the catalytic mechanism. Phosphoserine; by MAPK1 and MAPK3 is present on residues Ser-359 and Ser-364.

This sequence belongs to the protein-tyrosine phosphatase family. Non-receptor class dual specificity subfamily. In terms of processing, phosphorylation at Ser-359 and Ser-364 by MAPK1/ERK2 and MAPK3/ERK1 reduces its rate of degradation. Post-translationally, 'Lys-48'-linked polyubiquitinated by NEURL3, leading to proteasomal degradation. As to expression, expressed at high levels in the lung, liver placenta and pancreas. Moderate levels seen in the heart and skeletal muscle. Lower levels found in the brain and kidney.

The protein localises to the nucleus. It carries out the reaction O-phospho-L-tyrosyl-[protein] + H2O = L-tyrosyl-[protein] + phosphate. It catalyses the reaction O-phospho-L-seryl-[protein] + H2O = L-seryl-[protein] + phosphate. The enzyme catalyses O-phospho-L-threonyl-[protein] + H2O = L-threonyl-[protein] + phosphate. Its function is as follows. Dual specificity phosphatase that dephosphorylates MAP kinase MAPK1/ERK2 on both 'Thr-183' and 'Tyr-185', regulating its activity during the meiotic cell cycle. This is Dual specificity protein phosphatase 1 from Homo sapiens (Human).